The primary structure comprises 155 residues: MTEEATTTLSSADIIEIMKLLPHRYPFLMVDKIIEIDGDNTAIGIKNVTVNEPHFTGHFPESPIMPGVLLIEGMAQTAGAICAKKDGQPGNLVYFMTIENARFRKPVVPGDRVEFHVRKHKQRGNIWKFHCDAKVDGALVAEADIGAMIVRKDQA.

Residue His58 is part of the active site.

The protein belongs to the thioester dehydratase family. FabZ subfamily.

Its subcellular location is the cytoplasm. The enzyme catalyses a (3R)-hydroxyacyl-[ACP] = a (2E)-enoyl-[ACP] + H2O. In terms of biological role, involved in unsaturated fatty acids biosynthesis. Catalyzes the dehydration of short chain beta-hydroxyacyl-ACPs and long chain saturated and unsaturated beta-hydroxyacyl-ACPs. The polypeptide is 3-hydroxyacyl-[acyl-carrier-protein] dehydratase FabZ (Rhizobium johnstonii (strain DSM 114642 / LMG 32736 / 3841) (Rhizobium leguminosarum bv. viciae)).